We begin with the raw amino-acid sequence, 388 residues long: Chorismate synthase (388 aa).

NADP(+) contacts are provided by Arg-39 and Arg-45. Residues 132-134 (RSS), 251-252 (NA), Gly-296, 311-315 (KPIPT), and Arg-337 each bind FMN.

This sequence belongs to the chorismate synthase family. Homotetramer. Requires FMNH2 as cofactor.

It carries out the reaction 5-O-(1-carboxyvinyl)-3-phosphoshikimate = chorismate + phosphate. It functions in the pathway metabolic intermediate biosynthesis; chorismate biosynthesis; chorismate from D-erythrose 4-phosphate and phosphoenolpyruvate: step 7/7. In terms of biological role, catalyzes the anti-1,4-elimination of the C-3 phosphate and the C-6 proR hydrogen from 5-enolpyruvylshikimate-3-phosphate (EPSP) to yield chorismate, which is the branch point compound that serves as the starting substrate for the three terminal pathways of aromatic amino acid biosynthesis. This reaction introduces a second double bond into the aromatic ring system. This chain is Chorismate synthase, found in Staphylococcus aureus (strain MW2).